Here is a 504-residue protein sequence, read N- to C-terminus: MSTCIEGTPSTTRTPTRAWVALAVLALPVLLIAIDNTVLAFALPLIAEDFRPSATTQLWIVDVYSLVLAALLVAMGSLGDRLGRRRLLLIGGAGFAVVSALAAFAPSAELLVGARALLGVFGAMLMPSTLSLIRNIFTDASARRLAIAIWASCFTAGSALGPIVGGALLEHFHWGAVFLVAVPILLPLLVLGPRLVPESRDPNPGPFDPVSIVLSFTTMLPIVWAVKTAAHDGLSAAAAAAFAVGIVSGALFVRRQNRSATPMLDIGLFKVMPFTSSILANFLSIIGLIGFIFFISQHLQLVLGLSPLTAGLVTLPGAVVSMIAGLAVVKAAKRFAPDTLMVTGLVFVAVGFLMILLFRHNLTVAAIIASFVVLELGVGVSQTVSNDTIVASVPAAKSGAASAVSETAYELGAVVGTATLGTIFTAFYRSNVDVPAGLTPEQTGAAAESIGGAAAVAADLPAATATQLLDSARAAFDSGIAPTAVIAAMLVLAAAAVVGVAFRR.

Transmembrane regions (helical) follow at residues 19 to 39 (WVAL…NTVL), 58 to 78 (LWIV…MGSL), 87 to 107 (LLLI…FAPS), 110 to 130 (LLVG…PSTL), 145 to 165 (LAIA…PIVG), 172 to 192 (FHWG…LVLG), 206 to 226 (PFDP…VWAV), 233 to 253 (GLSA…ALFV), 275 to 295 (TSSI…IFFI), 309 to 329 (TAGL…LAVV), 338 to 358 (DTLM…ILLF), 361 to 381 (NLTV…VGVS), 408 to 428 (AYEL…TAFY), and 480 to 500 (IAPT…VVGV).

This sequence belongs to the major facilitator superfamily.

Its subcellular location is the cell inner membrane. Its activity is regulated as follows. Inhibited by the protonophore carbonyl cyanide m-chorophenylhydrazone (CCCP). Ethidium bromide efflux is inhibited by chlorpromazine, thioridazine and verapamil. Functionally, energy-dependent efflux pump that contributes to drug resistance. Catalyzes the efflux of norfloxacin and several related fluoroquinolones (FQ). Contributes significantly to the intrinsic MICs for ethidium bromide and acriflavine. Overexpression confers low-level resistance to hydrophilic FQ such as ciprofloxacin, ofloxacin and levofloxacin, and to ethidium bromide, acridine, acriflavine, rhodamine 123 and some quaternary ammonium compounds. May contribute to resistance to certain beta-lactams. Probably uses the proton motive force to export drugs. The chain is Multidrug efflux pump LfrA from Mycolicibacterium smegmatis (strain ATCC 700084 / mc(2)155) (Mycobacterium smegmatis).